The primary structure comprises 207 residues: D-aminoacyl-tRNA deacylase 1 (207 aa).

The short motif at 139-140 (GP) is the Gly-cisPro motif, important for rejection of L-amino acids element. Positions 142-207 (TIQLESPPAP…EGDVSSEREP (66 aa)) are disordered. Basic and acidic residues-rich tracts occupy residues 156 to 167 (LLSKQEKQQQRK) and 178 to 189 (SSREKAAQRSKV).

The protein belongs to the DTD family. Homodimer.

It localises to the cytoplasm. The enzyme catalyses a D-aminoacyl-tRNA + H2O = a tRNA + a D-alpha-amino acid + H(+). It carries out the reaction glycyl-tRNA(Ala) + H2O = tRNA(Ala) + glycine + H(+). Its function is as follows. D-aminoacyl-tRNA deacylase, with no observable activity on tRNAs charged with their cognate L-amino acid. Hydrolyzes correctly charged, achiral, glycyl-tRNA(Gly). Deacylates mischarged D.melanogaster and E.coli glycyl-tRNA(Ala), protecting cells against glycine mischarging by AlaRS. Acts via tRNA-based rather than protein-based catalysis; rejects L-amino acids rather than detecting D-amino acids in the active site. By recycling D-aminoacyl-tRNA to D-amino acids and free tRNA molecules, this enzyme counteracts the toxicity associated with the formation of D-aminoacyl-tRNA entities in vivo and helps enforce protein L-homochirality. The polypeptide is D-aminoacyl-tRNA deacylase 1 (Danio rerio (Zebrafish)).